Here is a 242-residue protein sequence, read N- to C-terminus: Probable transcriptional regulatory protein PXO_01555 (242 aa).

It belongs to the TACO1 family.

Its subcellular location is the cytoplasm. In Xanthomonas oryzae pv. oryzae (strain PXO99A), this protein is Probable transcriptional regulatory protein PXO_01555.